The chain runs to 135 residues: ATP synthase epsilon chain (135 aa).

It belongs to the ATPase epsilon chain family. As to quaternary structure, F-type ATPases have 2 components, CF(1) - the catalytic core - and CF(0) - the membrane proton channel. CF(1) has five subunits: alpha(3), beta(3), gamma(1), delta(1), epsilon(1). CF(0) has three main subunits: a, b and c.

The protein localises to the cell inner membrane. Functionally, produces ATP from ADP in the presence of a proton gradient across the membrane. This is ATP synthase epsilon chain from Brucella abortus (strain S19).